Here is a 101-residue protein sequence, read N- to C-terminus: Ubiquitin-related modifier 1 homolog (101 aa).

Residue glycine 101 is modified to 1-thioglycine. Glycine 101 is covalently cross-linked (Glycyl lysine isopeptide (Gly-Lys) (interchain with K-? in acceptor proteins)).

Belongs to the URM1 family. Interacts with cer. Post-translationally, C-terminal thiocarboxylation occurs in 2 steps, it is first acyl-adenylated (-COAMP) via the hesA/moeB/thiF part of the MOCS3 homolog, then thiocarboxylated (-COSH) via the rhodanese domain of the MOCS3 homolog.

The protein resides in the cytoplasm. It participates in tRNA modification; 5-methoxycarbonylmethyl-2-thiouridine-tRNA biosynthesis. Acts as a sulfur carrier required for 2-thiolation of mcm(5)S(2)U at tRNA wobble positions of cytosolic tRNA(Lys), tRNA(Glu) and tRNA(Gln). Serves as sulfur donor in tRNA 2-thiolation reaction by being thiocarboxylated (-COSH) at its C-terminus by MOCS3. The sulfur is then transferred to tRNA to form 2-thiolation of mcm(5)S(2)U. Also acts as a ubiquitin-like protein (UBL) that is covalently conjugated via an isopeptide bond to lysine residues of target proteins such as Prx2/Jafrac1, Ciao1, Eip71CD and GILT1. The thiocarboxylated form serves as substrate for conjugation and oxidative stress specifically induces the formation of UBL-protein conjugates. This Drosophila simulans (Fruit fly) protein is Ubiquitin-related modifier 1 homolog.